A 513-amino-acid chain; its full sequence is MQSVLVLDFGSQYTQLIARRIRELGIYSEILPYSTTPEAIREHDPKAIILSGGPTSVYGESAILPHPGIFSLGLPILGICYGLQAIANHFGGAVESSSKQEFGRAKILVDRTEGHESMLFKDIPDSDVWMSHGDKVTRMPEGFQITASSGNSEMCAIESFGPKAALKIYGLQFHPEVQHTLYGKQLLSNFLINIAGIRPDWSSKSFIEHQIEDIRQRADKGTVICGISGGVDSTVAAVLVSKAIGKQLHCVFVDNGLLRKNEARKVMEFLKPLGLNITLADSADLFLGRLKGVASPEKKRKIIGRTFIRVFEEHINEEKFLVQGTLYPDVIESQSVKGPSETIKSHHNVGGLPKRMKLKLIEPLRELFKDEVRAVGRELGIPEDILMRHPFPGPGLAVRVLGSLTRERLDILREADEIYIDELKSSGLYQQVWQAFSVLLPVQSVGVMGDKRTYENVLALRAVESTDGMTADWAHLPHDFLAKVSNRIINEVRGINRVAYDISSKPPATIEWE.

Positions Ser-3–Asp-200 constitute a Glutamine amidotransferase type-1 domain. The active-site Nucleophile is Cys-80. Active-site residues include His-174 and Glu-176. A GMPS ATP-PPase domain is found at Trp-201 to Arg-388. Ser-228–Thr-234 contacts ATP.

As to quaternary structure, homodimer.

It catalyses the reaction XMP + L-glutamine + ATP + H2O = GMP + L-glutamate + AMP + diphosphate + 2 H(+). The protein operates within purine metabolism; GMP biosynthesis; GMP from XMP (L-Gln route): step 1/1. In terms of biological role, catalyzes the synthesis of GMP from XMP. This Chlorobium luteolum (strain DSM 273 / BCRC 81028 / 2530) (Pelodictyon luteolum) protein is GMP synthase [glutamine-hydrolyzing].